The following is a 162-amino-acid chain: Chemoreceptor glutamine deamidase CheD (162 aa).

It belongs to the CheD family. Forms a complex with CheC.

It catalyses the reaction L-glutaminyl-[protein] + H2O = L-glutamyl-[protein] + NH4(+). Its function is as follows. Deamidates glutamine residues to glutamate on methyl-accepting chemotaxis receptors (MCPs). CheD-mediated MCP deamidation is required for productive communication of the conformational signals of the chemoreceptors to the CheA kinase. In Halalkalibacterium halodurans (strain ATCC BAA-125 / DSM 18197 / FERM 7344 / JCM 9153 / C-125) (Bacillus halodurans), this protein is Chemoreceptor glutamine deamidase CheD.